We begin with the raw amino-acid sequence, 311 residues long: Long form salivary protein D7L1 (311 aa).

Positions methionine 1 to alanine 21 are cleaved as a signal peptide. 4 disulfide bridges follow: cysteine 37-cysteine 73, cysteine 69-cysteine 128, cysteine 178-cysteine 211, and cysteine 252-cysteine 263.

The protein belongs to the PBP/GOBP family.

The protein localises to the secreted. Functionally, modulates blood feeding of female mosquitoes on vertebrate species by binding and sequestering different mediators involved in the host response. Binds leukotriene C4 and U-46619, a stable analog of thromboxane A2. Inhibits agonist-induced platelet aggregation. Exhibits vasodilating activity. The chain is Long form salivary protein D7L1 from Anopheles gambiae (African malaria mosquito).